A 519-amino-acid polypeptide reads, in one-letter code: Ribonuclease Y (519 aa).

Residues 6-26 (VPFYLLIFLVGIGLGVLTFWA) traverse the membrane as a helical segment. Positions 209–272 (TVCTVTIPNE…HIAKMALTEL (64 aa)) constitute a KH domain. Positions 335–428 (VLDHSLEVSH…CSAADAISAS (94 aa)) constitute an HD domain.

The protein belongs to the RNase Y family.

It localises to the cell membrane. Its function is as follows. Endoribonuclease that initiates mRNA decay. This Protochlamydia amoebophila (strain UWE25) protein is Ribonuclease Y.